The sequence spans 567 residues: Arginine--tRNA ligase (567 aa).

Residues 128-138 (ANPTGPLHVGH) carry the 'HIGH' region motif.

Belongs to the class-I aminoacyl-tRNA synthetase family. In terms of assembly, monomer.

The protein resides in the cytoplasm. It carries out the reaction tRNA(Arg) + L-arginine + ATP = L-arginyl-tRNA(Arg) + AMP + diphosphate. This chain is Arginine--tRNA ligase, found in Acidovorax ebreus (strain TPSY) (Diaphorobacter sp. (strain TPSY)).